The primary structure comprises 486 residues: UDP-N-acetylmuramate--L-alanine ligase (486 aa).

129–135 (GTHGKTT) contacts ATP.

It belongs to the MurCDEF family.

The protein localises to the cytoplasm. The enzyme catalyses UDP-N-acetyl-alpha-D-muramate + L-alanine + ATP = UDP-N-acetyl-alpha-D-muramoyl-L-alanine + ADP + phosphate + H(+). It participates in cell wall biogenesis; peptidoglycan biosynthesis. Cell wall formation. The sequence is that of UDP-N-acetylmuramate--L-alanine ligase from Vibrio vulnificus (strain YJ016).